The following is a 334-amino-acid chain: Sensor protein BceS (334 aa).

A run of 2 helical transmembrane segments spans residues 13 to 33 (ILII…DSAI) and 35 to 55 (LAPV…FLAV). Positions 121-326 (AWIHEIKTPL…TFTLTFPKEN (206 aa)) constitute a Histidine kinase domain. His124 carries the phosphohistidine; by autocatalysis modification.

The protein resides in the cell membrane. The enzyme catalyses ATP + protein L-histidine = ADP + protein N-phospho-L-histidine.. In terms of biological role, member of the two-component regulatory system BceS/BceR involved in the regulation of bacitracin resistance. Activates BceR in response to extracellular bacitracin. This chain is Sensor protein BceS (bceS), found in Halalkalibacterium halodurans (strain ATCC BAA-125 / DSM 18197 / FERM 7344 / JCM 9153 / C-125) (Bacillus halodurans).